Consider the following 1271-residue polypeptide: Clustered mitochondria protein homolog (1271 aa).

2 TPR repeats span residues 104-138 (RHKP…ELGE) and 502-535 (CYGL…KPHK). In terms of domain architecture, Clu spans 329 to 580 (DQSRPQLSIL…RSTPLDIDFI (252 aa)). Basic and acidic residues predominate over residues 729–763 (QEEKSKIEDNEKAIEEEKKEEKTEKKEEKEEKADE). Residues 729 to 783 (QEEKSKIEDNEKAIEEEKKEEKTEKKEEKEEKADEEKSENEEDKTKPEEPSKGVF) form a disordered region. TPR repeat units follow at residues 1067-1100 (ISSY…WDFV), 1109-1142 (VTTL…SEKI), and 1151-1184 (AMIH…FSRH). Positions 1212–1271 (QAKDKNKPKKVKAPPVPPQATTKKSKNKSKMAQTQISKLHLNSSTRFSSSSRVKPRLKKK) are disordered. A compositionally biased stretch (polar residues) spans 1241–1253 (KMAQTQISKLHLN). Positions 1254–1263 (SSTRFSSSSR) are enriched in low complexity.

This sequence belongs to the CLU family. May associate with the eukaryotic translation initiation factor 3 (eIF-3) complex.

The protein resides in the cytoplasm. In terms of biological role, mRNA-binding protein involved in proper cytoplasmic distribution of mitochondria. This Meyerozyma guilliermondii (strain ATCC 6260 / CBS 566 / DSM 6381 / JCM 1539 / NBRC 10279 / NRRL Y-324) (Yeast) protein is Clustered mitochondria protein homolog.